The primary structure comprises 638 residues: Ubiquitin-like-specific protease 2 (638 aa).

Over residues 1–12 (MRDSKDALDDKS) the composition is skewed to basic and acidic residues. Disordered regions lie at residues 1–79 (MRDS…PKHL) and 238–314 (PQKT…TSND). Residues 238-249 (PQKTVRSIVKQT) show a composition bias toward polar residues. The span at 250–264 (SSPHSSKMPKHSLPS) shows a compositional bias: low complexity. A compositionally biased stretch (polar residues) spans 267–314 (TPFNSNSGDSLLSRIKNSNQSSSERPTANNGAQEQNQSSSSAGNTSND). Residues H440 and D494 contribute to the active site. T526 is modified (phosphothreonine). The active site involves C544. The span at 610–619 (NERQSLSSGS) shows a compositional bias: polar residues. Residues 610–638 (NERQSLSSGSNDEEDKENDDDLAILPITN) are disordered. Residues 620–631 (NDEEDKENDDDL) show a composition bias toward acidic residues.

The protein belongs to the peptidase C48 family.

It localises to the nucleus. In Schizosaccharomyces pombe (strain 972 / ATCC 24843) (Fission yeast), this protein is Ubiquitin-like-specific protease 2 (ulp2).